A 620-amino-acid chain; its full sequence is uncharacterized protein (620 aa).

One can recognise a Radical SAM core domain in the interval 324–586; the sequence is RRYVTIAIIK…HPWEKGIYPT (263 aa). 3 residues coordinate [4Fe-4S] cluster: C338, C342, and C345. K552 carries the post-translational modification N6-(pyridoxal phosphate)lysine.

Belongs to the radical SAM superfamily. KamA family. Requires [4Fe-4S] cluster as cofactor. Pyridoxal 5'-phosphate is required as a cofactor.

This is an uncharacterized protein from Methanocaldococcus jannaschii (strain ATCC 43067 / DSM 2661 / JAL-1 / JCM 10045 / NBRC 100440) (Methanococcus jannaschii).